The following is a 395-amino-acid chain: G-protein coupled receptor 182 (395 aa).

At 1-53 the chain is on the extracellular side; that stretch reads MSVIPSSRPVSTLAPDNDFREIHNWTELLHLFNQTFSDCHMELNENTKQVVLF. Residues Asn-24 and Asn-33 are each glycosylated (N-linked (GlcNAc...) asparagine). A helical membrane pass occupies residues 54-75; sequence VFYLAIFVVGLVENVLVICVNC. The Cytoplasmic segment spans residues 76–86; it reads RRSGRVGMLNL. Residues 87 to 109 form a helical membrane-spanning segment; the sequence is YILNMAVADLGIILSLPVWMLEV. Residues 110 to 123 lie on the Extracellular side of the membrane; sequence MLEYTWLWGSFSCR. Cysteines 122 and 198 form a disulfide. The helical transmembrane segment at 124–145 threads the bilayer; it reads FIHYFYLANMYSSIFFLTCLSI. Over 146–166 the chain is Cytoplasmic; that stretch reads DRYVTLTNTSPSWQRHQHRIR. The helical transmembrane segment at 167 to 189 threads the bilayer; that stretch reads RAVCAGVWVLSAIIPLPEVVHIQ. The Extracellular segment spans residues 190-213; it reads LLDGSEPMCLFLAPFETYSAWALA. The chain crosses the membrane as a helical span at residues 214–235; sequence VALSATILGFLLPFPLIAVFNI. The Cytoplasmic segment spans residues 236 to 254; that stretch reads LSACRLRRQGQTESRRHCL. The helical transmembrane segment at 255 to 276 threads the bilayer; that stretch reads LMWAYIVVFVICWLPYHVTMLL. The Extracellular segment spans residues 277 to 295; sequence LTLHTTHIFLHCNLVNFLY. The helical transmembrane segment at 296–316 threads the bilayer; sequence FFYEIIDCFSMLHCVANPILY. Topologically, residues 317–395 are cytoplasmic; that stretch reads NFLSPSFRGR…RTPHLHSAIP (79 aa). At Ser-329 the chain carries Phosphoserine.

The protein belongs to the G-protein coupled receptor 1 family. As to expression, expressed in a wide variety of peripheral tissues in the adult rat with prominent expression in lung, testis, adrenal and liver.

The protein resides in the cell membrane. Orphan receptor. This Rattus norvegicus (Rat) protein is G-protein coupled receptor 182 (Gpr182).